Reading from the N-terminus, the 366-residue chain is Flagellar P-ring protein (366 aa).

A signal peptide spans 1-22 (MFTRKSVILMAVLLIWSAVSYA).

Belongs to the FlgI family. As to quaternary structure, the basal body constitutes a major portion of the flagellar organelle and consists of four rings (L,P,S, and M) mounted on a central rod.

It localises to the periplasm. The protein resides in the bacterial flagellum basal body. Its function is as follows. Assembles around the rod to form the L-ring and probably protects the motor/basal body from shearing forces during rotation. This is Flagellar P-ring protein from Hydrogenovibrio crunogenus (strain DSM 25203 / XCL-2) (Thiomicrospira crunogena).